A 427-amino-acid chain; its full sequence is Trigger factor (427 aa).

One can recognise a PPIase FKBP-type domain in the interval 163–248; the sequence is GDTVILDFEG…LHEIKTKEVP (86 aa).

The protein belongs to the FKBP-type PPIase family. Tig subfamily.

The protein resides in the cytoplasm. The catalysed reaction is [protein]-peptidylproline (omega=180) = [protein]-peptidylproline (omega=0). Its function is as follows. Involved in protein export. Acts as a chaperone by maintaining the newly synthesized protein in an open conformation. Functions as a peptidyl-prolyl cis-trans isomerase. This Listeria monocytogenes serotype 4a (strain HCC23) protein is Trigger factor.